Reading from the N-terminus, the 664-residue chain is MSLSKHLQKLVHKRESKKQPNKKMPVSVSKLRRPRTSKKTETGNPEKTLKDPRTCCNNLFSIFSARSFLYRVPLTILFLFLIYLWSTSTTVISGNVVHICISSRKLTDLYCLTAGSQPALRAPVNNFTAPASEDVVTSKEEKNVFVLGKDGDKGFAENETFEGGKDSDKSTVGENLTINKNETFTGETSGERVSILNQDAKPIHEKNLDSVLDQDSLPKNEIDQDFIIDWDPETGEERYRYFKAKTEDEETGLKSTEEYIQIQRTWLSMGNNRKKPGSCEGKGVYVYDLPSKFNKDLLRECSDMVPWADFCNYFKNDAFGELMESMGKGWFRTHQYSLEPIFHSRILKHPCRVHNETQAKLFYVPFYGGMDVLRWHFKNVSSDVKDVLPIEIVKWLGSKKSWRKNSGKDHVFVLGKISWDFRRVDKYSWGSSLLEMQEMKNPTKLLIERNPWEVNDIAIPHPTYFHPKTDTDIAIWQNKILGKPRRSLISFAGAARPGNPESIRSILIDQCRSSPNQCRFLNCTDGGCDKSESVIELFRDSEFCLQPPGDSPTRKSIFDSLILGCIPVIFDPYSAYYQYTWHLPEDHRRYSVYINKEDVKLKRVNVIEKLMSKTLREREDMRSYIVHELLPGLVYGDSNAKFERFRDAFDITMDSLFKKIAKTV.

Over residues 1–21 (MSLSKHLQKLVHKRESKKQPN) the composition is skewed to basic residues. A disordered region spans residues 1–49 (MSLSKHLQKLVHKRESKKQPNKKMPVSVSKLRRPRTSKKTETGNPEKTL). At 1-71 (MSLSKHLQKL…IFSARSFLYR (71 aa)) the chain is on the cytoplasmic side. The helical; Signal-anchor for type II membrane protein transmembrane segment at 72 to 92 (VPLTILFLFLIYLWSTSTTVI) threads the bilayer. Topologically, residues 93–664 (SGNVVHICIS…SLFKKIAKTV (572 aa)) are lumenal. 7 N-linked (GlcNAc...) asparagine glycosylation sites follow: Asn126, Asn158, Asn175, Asn181, Asn355, Asn379, and Asn522.

The protein belongs to the glycosyltransferase 47 family. In terms of tissue distribution, root hair specific. Expressed in roots and young leaves.

Its subcellular location is the golgi apparatus membrane. Its function is as follows. Xyloglucan-specific galacturonosyltransferase that forms the beta-D-galactosyluronic acid-(1-&gt;2)-alpha-D-xylosyl linkage. Required for root hair development probably by providing important acidic xyloglucans. This Arabidopsis thaliana (Mouse-ear cress) protein is Xyloglucan-specific galacturonosyltransferase 1.